The chain runs to 120 residues: Aspartate 1-decarboxylase (120 aa).

Ser25 acts as the Schiff-base intermediate with substrate; via pyruvic acid in catalysis. The residue at position 25 (Ser25) is a Pyruvic acid (Ser). Thr57 serves as a coordination point for substrate. The Proton donor role is filled by Tyr58. 73-75 (GAA) contacts substrate.

It belongs to the PanD family. As to quaternary structure, heterooctamer of four alpha and four beta subunits. Pyruvate serves as cofactor. Is synthesized initially as an inactive proenzyme, which is activated by self-cleavage at a specific serine bond to produce a beta-subunit with a hydroxyl group at its C-terminus and an alpha-subunit with a pyruvoyl group at its N-terminus.

The protein resides in the cytoplasm. It carries out the reaction L-aspartate + H(+) = beta-alanine + CO2. The protein operates within cofactor biosynthesis; (R)-pantothenate biosynthesis; beta-alanine from L-aspartate: step 1/1. In terms of biological role, catalyzes the pyruvoyl-dependent decarboxylation of aspartate to produce beta-alanine. This is Aspartate 1-decarboxylase from Thermus thermophilus (strain ATCC 27634 / DSM 579 / HB8).